A 92-amino-acid polypeptide reads, in one-letter code: uncharacterized protein (92 aa).

The tract at residues 25-53 (AGRGVRREARDTPCRGTAEGLATSQPEDG) is disordered.

This is an uncharacterized protein from Treponema pallidum (strain Nichols).